Consider the following 205-residue polypeptide: Protein N-terminal glutamine amidohydrolase (205 aa).

Active-site residues include Cys20, His74, and Asp90.

The protein belongs to the NTAQ1 family. Monomer.

It carries out the reaction N-terminal L-glutaminyl-[protein] + H2O = N-terminal L-glutamyl-[protein] + NH4(+). Mediates the side-chain deamidation of N-terminal glutamine residues to glutamate, an important step in N-end rule pathway of protein degradation. Conversion of the resulting N-terminal glutamine to glutamate renders the protein susceptible to arginylation, polyubiquitination and degradation as specified by the N-end rule. Does not act on substrates with internal or C-terminal glutamine and does not act on non-glutamine residues in any position. The protein is Protein N-terminal glutamine amidohydrolase (tun) of Drosophila melanogaster (Fruit fly).